Consider the following 101-residue polypeptide: Small ribosomal subunit protein uS14 (101 aa).

The protein belongs to the universal ribosomal protein uS14 family. Part of the 30S ribosomal subunit. Contacts proteins S3 and S10.

Functionally, binds 16S rRNA, required for the assembly of 30S particles and may also be responsible for determining the conformation of the 16S rRNA at the A site. In Shewanella sp. (strain ANA-3), this protein is Small ribosomal subunit protein uS14.